The primary structure comprises 354 residues: MEISGFMKHPWIGRRVLKTGLAVCLTTAICMAFNLSPTFAVISAIVTTEPTAADSLKKGLIRLPAAALGAFFAVLSAYFFGQTPITYAIVSMITIAVCARLRLDAGTLVATLTAVAMIPSTTDHLFADYVSRVAGTSLGIMISTFVNFMILPPKFGPILMNKVEKMFAMLSSELKLVTTKVVDFEKEETMTSYRTLHHHLSETYKLTTFQHDEWKYRKSSSSEKRSFTYLHRKLDYVYKALAHLGKIGQIRLKKPLSVKERQLVLSFLVSLTNILQDPLHQIHTEHYALARQLEDAMHKKKDATEPIHRLLSELISLHDLTVELEQCTADERRFSLEERAYPSYIFLERLRPSD.

A run of 4 helical transmembrane segments spans residues 22 to 42, 60 to 80, 107 to 127, and 133 to 153; these read AVCLTTAICMAFNLSPTFAVI, LIRLPAAALGAFFAVLSAYFF, TLVATLTAVAMIPSTTDHLFA, and VAGTSLGIMISTFVNFMILPP.

The protein belongs to the UPF0421 family.

The protein localises to the cell membrane. This Halalkalibacterium halodurans (strain ATCC BAA-125 / DSM 18197 / FERM 7344 / JCM 9153 / C-125) (Bacillus halodurans) protein is UPF0421 protein BH2644.